A 466-amino-acid polypeptide reads, in one-letter code: Membrane-bound lytic murein transglycosylase F (466 aa).

Positions 1-24 are cleaved as a signal peptide; the sequence is MKRFKLNYFIIGLIAILLTWSLWT. Residues 25-268 are non-LT domain; the sequence is TVPWRNAHQD…RLEEKYLGHV (244 aa). Positions 269–466 are LT domain; the sequence is GGFDYVDTKT…KEKKAAQLAD (198 aa). Residue Glu-313 is part of the active site.

In the N-terminal section; belongs to the bacterial solute-binding protein 3 family. The protein in the C-terminal section; belongs to the transglycosylase Slt family.

Its subcellular location is the cell outer membrane. The enzyme catalyses Exolytic cleavage of the (1-&gt;4)-beta-glycosidic linkage between N-acetylmuramic acid (MurNAc) and N-acetylglucosamine (GlcNAc) residues in peptidoglycan, from either the reducing or the non-reducing ends of the peptidoglycan chains, with concomitant formation of a 1,6-anhydrobond in the MurNAc residue.. Murein-degrading enzyme that degrades murein glycan strands and insoluble, high-molecular weight murein sacculi, with the concomitant formation of a 1,6-anhydromuramoyl product. Lytic transglycosylases (LTs) play an integral role in the metabolism of the peptidoglycan (PG) sacculus. Their lytic action creates space within the PG sacculus to allow for its expansion as well as for the insertion of various structures such as secretion systems and flagella. The sequence is that of Membrane-bound lytic murein transglycosylase F from Sodalis glossinidius (strain morsitans).